The primary structure comprises 208 residues: Ribosomal RNA large subunit methyltransferase E (208 aa).

Residues G62, W64, D82, D98, and D123 each contribute to the S-adenosyl-L-methionine site. The Proton acceptor role is filled by K163.

The protein belongs to the class I-like SAM-binding methyltransferase superfamily. RNA methyltransferase RlmE family.

It localises to the cytoplasm. The catalysed reaction is uridine(2552) in 23S rRNA + S-adenosyl-L-methionine = 2'-O-methyluridine(2552) in 23S rRNA + S-adenosyl-L-homocysteine + H(+). Functionally, specifically methylates the uridine in position 2552 of 23S rRNA at the 2'-O position of the ribose in the fully assembled 50S ribosomal subunit. The chain is Ribosomal RNA large subunit methyltransferase E from Mannheimia succiniciproducens (strain KCTC 0769BP / MBEL55E).